The sequence spans 473 residues: ATP synthase subunit beta (473 aa).

156-163 lines the ATP pocket; the sequence is GGAGVGKT.

This sequence belongs to the ATPase alpha/beta chains family. In terms of assembly, F-type ATPases have 2 components, CF(1) - the catalytic core - and CF(0) - the membrane proton channel. CF(1) has five subunits: alpha(3), beta(3), gamma(1), delta(1), epsilon(1). CF(0) has three main subunits: a(1), b(2) and c(9-12). The alpha and beta chains form an alternating ring which encloses part of the gamma chain. CF(1) is attached to CF(0) by a central stalk formed by the gamma and epsilon chains, while a peripheral stalk is formed by the delta and b chains.

Its subcellular location is the cell inner membrane. It carries out the reaction ATP + H2O + 4 H(+)(in) = ADP + phosphate + 5 H(+)(out). Its function is as follows. Produces ATP from ADP in the presence of a proton gradient across the membrane. The catalytic sites are hosted primarily by the beta subunits. The sequence is that of ATP synthase subunit beta from Desulfovibrio desulfuricans (strain ATCC 27774 / DSM 6949 / MB).